The chain runs to 40 residues: Metallothionein-1 (40 aa).

Belongs to the metallothionein superfamily. Type 5 family.

Functionally, this protein binds cations of several transition elements. It is thought to be involved in detoxification processes. In Drosophila ananassae (Fruit fly), this protein is Metallothionein-1 (MtnA).